Consider the following 499-residue polypeptide: Signal recognition particle subunit SRP54 2 (499 aa).

Residues 1-295 are G-domain; sequence MVLAELGGSI…DVKPFVSRLL (295 aa). GTP contacts are provided by residues 108–115, 190–194, and 248–251; these read GLQGSGKT, DTSGR, and TKMD. The M-domain stretch occupies residues 296 to 499; sequence GMGDWSGFMD…MGGMFGGGDK (204 aa).

This sequence belongs to the GTP-binding SRP family. SRP54 subfamily. In terms of assembly, component of a signal recognition particle (SRP) complex that consists of a 7SL RNA molecule of 300 nucleotides and six protein subunits: SRP72, SRP68, SRP54, SRP19, SRP14 and SRP9.

The protein localises to the cytoplasm. The protein resides in the endoplasmic reticulum. It carries out the reaction GTP + H2O = GDP + phosphate + H(+). In terms of biological role, component of the signal recognition particle (SRP) complex, a ribonucleoprotein complex that mediates the cotranslational targeting of secretory and membrane proteins to the endoplasmic reticulum (ER). As part of the SRP complex, associates with the SRP receptor (SR) component SRPRA to target secretory proteins to the endoplasmic reticulum membrane. Binds to the signal sequence of presecretory proteins when they emerge from the ribosomes. Displays basal GTPase activity, and stimulates reciprocal GTPase activation of the SR subunit SRPRA. Forms a guanosine 5'-triphosphate (GTP)-dependent complex with the SR subunit SRPRA. SR compaction and GTPase mediated rearrangement of SR drive SRP-mediated cotranslational protein translocation into the ER. Requires the presence of SRP9/SRP14 and/or SRP19 to stably interact with RNA. The chain is Signal recognition particle subunit SRP54 2 from Solanum lycopersicum (Tomato).